The chain runs to 829 residues: Pre-mRNA-splicing factor syf1 (829 aa).

HAT repeat units follow at residues Ser15–Gln47, Gly49–Lys81, Ser93–Gln125, Pro127–Ser161, Glu163–Ala182, Gly277–Ser312, Asp380–Ala418, Gly420–Arg456, Ala473–Leu505, Lys544–Asp578, Ile581–Glu615, and Gly689–Gln723. The disordered stretch occupies residues Ala799–Glu829.

Belongs to the crooked-neck family. In terms of assembly, associated with the spliceosome.

The protein localises to the nucleus. Its function is as follows. Involved in pre-mRNA splicing and cell cycle progression. The chain is Pre-mRNA-splicing factor syf1 (msp-41) from Neurospora crassa (strain ATCC 24698 / 74-OR23-1A / CBS 708.71 / DSM 1257 / FGSC 987).